The following is a 281-amino-acid chain: Bifunctional protein FolD (281 aa).

NADP(+)-binding positions include 165 to 167, Thr192, and Val233; that span reads GRG.

It belongs to the tetrahydrofolate dehydrogenase/cyclohydrolase family. In terms of assembly, homodimer.

The enzyme catalyses (6R)-5,10-methylene-5,6,7,8-tetrahydrofolate + NADP(+) = (6R)-5,10-methenyltetrahydrofolate + NADPH. It carries out the reaction (6R)-5,10-methenyltetrahydrofolate + H2O = (6R)-10-formyltetrahydrofolate + H(+). Its pathway is one-carbon metabolism; tetrahydrofolate interconversion. Catalyzes the oxidation of 5,10-methylenetetrahydrofolate to 5,10-methenyltetrahydrofolate and then the hydrolysis of 5,10-methenyltetrahydrofolate to 10-formyltetrahydrofolate. This chain is Bifunctional protein FolD, found in Mycobacterium marinum (strain ATCC BAA-535 / M).